Here is a 524-residue protein sequence, read N- to C-terminus: Phosphoenolpyruvate carboxykinase (ATP) (524 aa).

Substrate is bound by residues R52, Y188, and K194. Residues K194, H213, and 229-237 (GLSGTGKTT) contribute to the ATP site. 2 residues coordinate Mn(2+): K194 and H213. Position 250 (D250) interacts with Mn(2+). Residues E278, R314, and T439 each coordinate ATP. R314 lines the substrate pocket.

The protein belongs to the phosphoenolpyruvate carboxykinase (ATP) family. It depends on Mn(2+) as a cofactor.

It is found in the cytoplasm. It catalyses the reaction oxaloacetate + ATP = phosphoenolpyruvate + ADP + CO2. Its pathway is carbohydrate biosynthesis; gluconeogenesis. In terms of biological role, involved in the gluconeogenesis. Catalyzes the conversion of oxaloacetate (OAA) to phosphoenolpyruvate (PEP) through direct phosphoryl transfer between the nucleoside triphosphate and OAA. The protein is Phosphoenolpyruvate carboxykinase (ATP) of Campylobacter jejuni subsp. doylei (strain ATCC BAA-1458 / RM4099 / 269.97).